We begin with the raw amino-acid sequence, 41 residues long: Photosystem I reaction center subunit VIII (41 aa).

A helical transmembrane segment spans residues 12–32 (WIMIPVTCWLFPVVVMGLLFI).

It belongs to the PsaI family.

The protein localises to the cellular thylakoid membrane. In terms of biological role, may help in the organization of the PsaL subunit. In Cyanothece sp. (strain PCC 7425 / ATCC 29141), this protein is Photosystem I reaction center subunit VIII.